We begin with the raw amino-acid sequence, 533 residues long: Adenosine deaminase (533 aa).

The N-terminal stretch at methionine 1–proline 19 is a signal peptide.

The protein belongs to the metallo-dependent hydrolases superfamily. Adenosine and AMP deaminases family. ADGF subfamily. The cofactor is Zn(2+). Post-translationally, proteolytically cleaved by human mast cell tryptase and chymase. Female salivary gland (at protein level).

It localises to the secreted. The catalysed reaction is adenosine + H2O + H(+) = inosine + NH4(+). The enzyme catalyses 2'-deoxyadenosine + H2O + H(+) = 2'-deoxyinosine + NH4(+). Catalyzes the deamination of adenosine to inosine and deoxyadenosine to deoxyinosine. Induces degranulation of host mast cells, and secretion of tryptase and IL6. Modulates enzymatic activities of human tryptase and chymase. Induces release of cytokines, such as IL1B, IL6, TNF, CCL2, IFN-beta (INFB1) and ISG15, from host monocytes and macrophages. Activates host NF-kappa-B signaling pathway in TAK1/MAP3K7-dependent manner. Its function is as follows. (Microbial infection) Promotes replication of dengue virus type 2 in host cells probably via modulation of cytokine production in host macrophages and monocytes. In Aedes albopictus (Asian tiger mosquito), this protein is Adenosine deaminase.